The chain runs to 142 residues: Transcription antitermination protein NusB (142 aa).

This sequence belongs to the NusB family.

Its function is as follows. Involved in transcription antitermination. Required for transcription of ribosomal RNA (rRNA) genes. Binds specifically to the boxA antiterminator sequence of the ribosomal RNA (rrn) operons. This chain is Transcription antitermination protein NusB, found in Levilactobacillus brevis (strain ATCC 367 / BCRC 12310 / CIP 105137 / JCM 1170 / LMG 11437 / NCIMB 947 / NCTC 947) (Lactobacillus brevis).